Consider the following 211-residue polypeptide: tRNA (guanine-N(7)-)-methyltransferase (211 aa).

4 residues coordinate S-adenosyl-L-methionine: E44, D69, D96, and D118. D118 is a catalytic residue. K122 serves as a coordination point for substrate. Positions 124–129 (KHEKRR) are interaction with RNA. Substrate contacts are provided by residues D154 and 191–194 (TEYE).

The protein belongs to the class I-like SAM-binding methyltransferase superfamily. TrmB family.

The enzyme catalyses guanosine(46) in tRNA + S-adenosyl-L-methionine = N(7)-methylguanosine(46) in tRNA + S-adenosyl-L-homocysteine. The protein operates within tRNA modification; N(7)-methylguanine-tRNA biosynthesis. Functionally, catalyzes the formation of N(7)-methylguanine at position 46 (m7G46) in tRNA. The polypeptide is tRNA (guanine-N(7)-)-methyltransferase (Streptococcus pyogenes serotype M12 (strain MGAS2096)).